The chain runs to 123 residues: uncharacterized protein (123 aa).

The interval 17-74 (FQKKKKTGSQTRRTLKPQPQQLQQNLPKGHETTGHTYERVLQQQGSQERSPGLMSEDS) is disordered. Position 30 is a phosphothreonine (threonine 30). Over residues 32 to 43 (KPQPQQLQQNLP) the composition is skewed to low complexity. Residues 44–54 (KGHETTGHTYE) are compositionally biased toward basic and acidic residues. Serine 62 carries the post-translational modification Phosphoserine.

This is an uncharacterized protein from Homo sapiens (Human).